The primary structure comprises 449 residues: C4-dicarboxylate transport protein (449 aa).

8 helical membrane passes run 18–38 (PFYL…ALLG), 61–81 (MIIS…VAHV), 93–113 (VYFL…AHVV), 159–179 (FVGD…IALA), 202–222 (LVQM…AFTI), 244–264 (SLLF…FSIL), 346–366 (LFLV…AGFI), and 369–389 (AATL…ILGV).

The protein belongs to the dicarboxylate/amino acid:cation symporter (DAACS) (TC 2.A.23) family.

The protein resides in the cell inner membrane. In terms of biological role, responsible for the transport of dicarboxylates such as succinate, fumarate, and malate from the periplasm across the membrane. The protein is C4-dicarboxylate transport protein of Xylella fastidiosa (strain M23).